Reading from the N-terminus, the 310-residue chain is MNKALPKAIFLMGPTASGKTNLAIELRKRFPVELISVDSALIYKGMDIGTAKPNAEELLQAPHRLIDILEPTESYSAADFRRDALKEMDDIVAQGKIPLLVGGTMLYYKALLEGLSPLPAADADIRAQIEQEAEQFGWEAMHDQLKSIDPVSAERIHPNDPQRLSRALEVFRISGKTLTELTQIKGDALPYEVHQFAIAPKERAEIHRRIELRFANMMEEGFEAEARALYERDDLHADLPSIRCVGYRQMWDYFDGEGTLDEAVFRGICATRQLAKRQITWLRSWKELTWLDSDDIDGALELISTQLEKK.

ATP is bound at residue 13-20 (GPTASGKT). Substrate is bound at residue 15–20 (TASGKT). Interaction with substrate tRNA regions lie at residues 38–41 (DSAL), 162–166 (QRLSR), 243–248 (RCVGYR), and 276–283 (KRQITWLR).

It belongs to the IPP transferase family. As to quaternary structure, monomer. Mg(2+) serves as cofactor.

The enzyme catalyses adenosine(37) in tRNA + dimethylallyl diphosphate = N(6)-dimethylallyladenosine(37) in tRNA + diphosphate. Its function is as follows. Catalyzes the transfer of a dimethylallyl group onto the adenine at position 37 in tRNAs that read codons beginning with uridine, leading to the formation of N6-(dimethylallyl)adenosine (i(6)A). The sequence is that of tRNA dimethylallyltransferase from Aliivibrio fischeri (strain MJ11) (Vibrio fischeri).